The following is a 295-amino-acid chain: Pyridoxal 5'-phosphate synthase subunit PdxS (295 aa).

Residue Asp25 participates in D-ribose 5-phosphate binding. The active-site Schiff-base intermediate with D-ribose 5-phosphate is the Lys82. Residue Gly154 coordinates D-ribose 5-phosphate. Arg166 is a D-glyceraldehyde 3-phosphate binding site. D-ribose 5-phosphate-binding positions include Gly215 and Gly236–Ser237.

It belongs to the PdxS/SNZ family. In terms of assembly, in the presence of PdxT, forms a dodecamer of heterodimers.

The enzyme catalyses aldehydo-D-ribose 5-phosphate + D-glyceraldehyde 3-phosphate + L-glutamine = pyridoxal 5'-phosphate + L-glutamate + phosphate + 3 H2O + H(+). It functions in the pathway cofactor biosynthesis; pyridoxal 5'-phosphate biosynthesis. Catalyzes the formation of pyridoxal 5'-phosphate from ribose 5-phosphate (RBP), glyceraldehyde 3-phosphate (G3P) and ammonia. The ammonia is provided by the PdxT subunit. Can also use ribulose 5-phosphate and dihydroxyacetone phosphate as substrates, resulting from enzyme-catalyzed isomerization of RBP and G3P, respectively. This chain is Pyridoxal 5'-phosphate synthase subunit PdxS, found in Macrococcus caseolyticus (strain JCSC5402) (Macrococcoides caseolyticum).